The sequence spans 155 residues: SsrA-binding protein (155 aa).

This sequence belongs to the SmpB family.

It localises to the cytoplasm. Its function is as follows. Required for rescue of stalled ribosomes mediated by trans-translation. Binds to transfer-messenger RNA (tmRNA), required for stable association of tmRNA with ribosomes. tmRNA and SmpB together mimic tRNA shape, replacing the anticodon stem-loop with SmpB. tmRNA is encoded by the ssrA gene; the 2 termini fold to resemble tRNA(Ala) and it encodes a 'tag peptide', a short internal open reading frame. During trans-translation Ala-aminoacylated tmRNA acts like a tRNA, entering the A-site of stalled ribosomes, displacing the stalled mRNA. The ribosome then switches to translate the ORF on the tmRNA; the nascent peptide is terminated with the 'tag peptide' encoded by the tmRNA and targeted for degradation. The ribosome is freed to recommence translation, which seems to be the essential function of trans-translation. In Streptococcus pneumoniae (strain Hungary19A-6), this protein is SsrA-binding protein.